The following is a 147-amino-acid chain: Lysozyme C (147 aa).

The N-terminal stretch at 1–18 is a signal peptide; the sequence is MRSLLILVLCFLPLAALG. The C-type lysozyme domain occupies 19-147; that stretch reads KVFGRCELAA…VQAWIRGCRL (129 aa). 4 disulfide bridges follow: cysteine 24–cysteine 145, cysteine 48–cysteine 133, cysteine 82–cysteine 98, and cysteine 94–cysteine 112. Catalysis depends on residues glutamate 53 and aspartate 70. Aspartate 119 lines the substrate pocket.

Belongs to the glycosyl hydrolase 22 family. Monomer. In terms of tissue distribution, in the egg white and polymorphonuclear leukocytes.

It is found in the secreted. The enzyme catalyses Hydrolysis of (1-&gt;4)-beta-linkages between N-acetylmuramic acid and N-acetyl-D-glucosamine residues in a peptidoglycan and between N-acetyl-D-glucosamine residues in chitodextrins.. In terms of biological role, lysozymes have primarily a bacteriolytic function; those in tissues and body fluids are associated with the monocyte-macrophage system and enhance the activity of immunoagents. Has bacteriolytic activity against M.luteus. In Gallus gallus (Chicken), this protein is Lysozyme C (LYZ).